Consider the following 358-residue polypeptide: UDP-N-acetylglucosamine--N-acetylmuramyl-(pentapeptide) pyrophosphoryl-undecaprenol N-acetylglucosamine transferase (358 aa).

Arginine 166, serine 196, and glutamine 291 together coordinate UDP-N-acetyl-alpha-D-glucosamine.

This sequence belongs to the glycosyltransferase 28 family. MurG subfamily.

It is found in the cell membrane. The catalysed reaction is Mur2Ac(oyl-L-Ala-gamma-D-Glu-L-Lys-D-Ala-D-Ala)-di-trans,octa-cis-undecaprenyl diphosphate + UDP-N-acetyl-alpha-D-glucosamine = beta-D-GlcNAc-(1-&gt;4)-Mur2Ac(oyl-L-Ala-gamma-D-Glu-L-Lys-D-Ala-D-Ala)-di-trans,octa-cis-undecaprenyl diphosphate + UDP + H(+). It functions in the pathway cell wall biogenesis; peptidoglycan biosynthesis. Functionally, cell wall formation. Catalyzes the transfer of a GlcNAc subunit on undecaprenyl-pyrophosphoryl-MurNAc-pentapeptide (lipid intermediate I) to form undecaprenyl-pyrophosphoryl-MurNAc-(pentapeptide)GlcNAc (lipid intermediate II). The protein is UDP-N-acetylglucosamine--N-acetylmuramyl-(pentapeptide) pyrophosphoryl-undecaprenol N-acetylglucosamine transferase of Staphylococcus saprophyticus subsp. saprophyticus (strain ATCC 15305 / DSM 20229 / NCIMB 8711 / NCTC 7292 / S-41).